Reading from the N-terminus, the 321-residue chain is Glucokinase (321 aa).

Residue 8–13 (GDVGGT) coordinates ATP.

Belongs to the bacterial glucokinase family.

The protein localises to the cytoplasm. It catalyses the reaction D-glucose + ATP = D-glucose 6-phosphate + ADP + H(+). The protein is Glucokinase of Salmonella schwarzengrund (strain CVM19633).